The sequence spans 403 residues: Solanesyl-diphosphate synthase 2, chloroplastic (403 aa).

A chloroplast-targeting transit peptide spans 1 to 62; it reads MLSVSCPRVY…QPGLAAVDVP (62 aa). Isopentenyl diphosphate contacts are provided by Lys123, Arg126, and His161. Mg(2+) contacts are provided by Asp168 and Asp172. Residue Arg177 coordinates an all-trans-polyprenyl diphosphate. Position 178 (Arg178) interacts with isopentenyl diphosphate. An all-trans-polyprenyl diphosphate is bound by residues Lys254, Thr255, Gln292, and Lys309.

Belongs to the FPP/GGPP synthase family. In terms of assembly, homodimer. Interacts with FBN5. The cofactor is Mg(2+). In terms of tissue distribution, expressed in leaves, stems and roots. Highest expression in leaves and roots.

The protein resides in the plastid. It localises to the chloroplast. It catalyses the reaction 7 isopentenyl diphosphate + (2E)-geranyl diphosphate = all-trans-nonaprenyl diphosphate + 7 diphosphate. Functionally, involved in providing solanesyl diphosphate for plastoquinone-9 (PQ-9) formation. Geranyl diphosphate is the preferred substrate. The protein is Solanesyl-diphosphate synthase 2, chloroplastic of Oryza sativa subsp. japonica (Rice).